A 623-amino-acid polypeptide reads, in one-letter code: tRNA uridine 5-carboxymethylaminomethyl modification enzyme MnmG (623 aa).

Position 10–15 (10–15 (GGGHAG)) interacts with FAD. 269–283 (GPRYCPSIEDKIVRF) serves as a coordination point for NAD(+).

This sequence belongs to the MnmG family. In terms of assembly, homodimer. Heterotetramer of two MnmE and two MnmG subunits. FAD serves as cofactor.

Its subcellular location is the cytoplasm. Its function is as follows. NAD-binding protein involved in the addition of a carboxymethylaminomethyl (cmnm) group at the wobble position (U34) of certain tRNAs, forming tRNA-cmnm(5)s(2)U34. This is tRNA uridine 5-carboxymethylaminomethyl modification enzyme MnmG from Rhizobium meliloti (strain 1021) (Ensifer meliloti).